The chain runs to 304 residues: Putative F-box/LRR-repeat protein 21 (304 aa).

The F-box domain maps to Arg-43 to Ile-90. LRR repeat units follow at residues Leu-132–Asn-159, Thr-173–Ser-198, Gly-218–Leu-241, and Ala-243–Lys-268.

This chain is Putative F-box/LRR-repeat protein 21 (FBL21), found in Arabidopsis thaliana (Mouse-ear cress).